The following is a 640-amino-acid chain: 1-deoxy-D-xylulose-5-phosphate synthase (640 aa).

Residues H78 and 119–121 (GHS) each bind thiamine diphosphate. Mg(2+) is bound at residue D151. Thiamine diphosphate-binding positions include 152 to 153 (GA), N180, Y289, and E371. Position 180 (N180) interacts with Mg(2+).

Belongs to the transketolase family. DXPS subfamily. Homodimer. Mg(2+) is required as a cofactor. It depends on thiamine diphosphate as a cofactor.

It catalyses the reaction D-glyceraldehyde 3-phosphate + pyruvate + H(+) = 1-deoxy-D-xylulose 5-phosphate + CO2. It functions in the pathway metabolic intermediate biosynthesis; 1-deoxy-D-xylulose 5-phosphate biosynthesis; 1-deoxy-D-xylulose 5-phosphate from D-glyceraldehyde 3-phosphate and pyruvate: step 1/1. Catalyzes the acyloin condensation reaction between C atoms 2 and 3 of pyruvate and glyceraldehyde 3-phosphate to yield 1-deoxy-D-xylulose-5-phosphate (DXP). The polypeptide is 1-deoxy-D-xylulose-5-phosphate synthase (Bartonella quintana (strain Toulouse) (Rochalimaea quintana)).